Reading from the N-terminus, the 111-residue chain is Large ribosomal subunit protein uL22 (111 aa).

It belongs to the universal ribosomal protein uL22 family. Part of the 50S ribosomal subunit.

This protein binds specifically to 23S rRNA; its binding is stimulated by other ribosomal proteins, e.g. L4, L17, and L20. It is important during the early stages of 50S assembly. It makes multiple contacts with different domains of the 23S rRNA in the assembled 50S subunit and ribosome. In terms of biological role, the globular domain of the protein is located near the polypeptide exit tunnel on the outside of the subunit, while an extended beta-hairpin is found that lines the wall of the exit tunnel in the center of the 70S ribosome. The protein is Large ribosomal subunit protein uL22 of Clostridium novyi (strain NT).